Reading from the N-terminus, the 158-residue chain is Protein Smg homolog (158 aa).

This sequence belongs to the Smg family.

The chain is Protein Smg homolog from Vibrio atlanticus (strain LGP32) (Vibrio splendidus (strain Mel32)).